A 202-amino-acid polypeptide reads, in one-letter code: Small ribosomal subunit protein uS4c (202 aa).

An S4 RNA-binding domain is found at Met-90–Asn-154.

Belongs to the universal ribosomal protein uS4 family. Part of the 30S ribosomal subunit. Contacts protein S5. The interaction surface between S4 and S5 is involved in control of translational fidelity.

The protein localises to the plastid. It is found in the chloroplast. Functionally, one of the primary rRNA binding proteins, it binds directly to 16S rRNA where it nucleates assembly of the body of the 30S subunit. Its function is as follows. With S5 and S12 plays an important role in translational accuracy. This chain is Small ribosomal subunit protein uS4c (rps4), found in Marchantia polymorpha (Common liverwort).